Reading from the N-terminus, the 414-residue chain is 25-hydroxycholesterol 7-alpha-hydroxylase (414 aa).

Position 354 (Cys354) interacts with heme.

This sequence belongs to the cytochrome P450 family. Requires heme as cofactor. Highly expressed in brain; also expressed in liver and kidney.

It localises to the endoplasmic reticulum membrane. Its subcellular location is the microsome membrane. The catalysed reaction is 25-hydroxycholesterol + reduced [NADPH--hemoprotein reductase] + O2 = 7alpha,25-dihydroxycholesterol + oxidized [NADPH--hemoprotein reductase] + H2O + H(+). It catalyses the reaction (25R)-cholest-5-ene-3beta,26-diol + reduced [NADPH--hemoprotein reductase] + O2 = (25R)-cholest-5-en-3beta,7alpha,26-triol + oxidized [NADPH--hemoprotein reductase] + H2O + H(+). Its pathway is lipid metabolism; bile acid biosynthesis. In terms of biological role, oxysterol 7alpha-hydroxylase that mediates formation of 7-alpha,25-dihydroxycholesterol (7-alpha,25-OHC) from 25-hydroxycholesterol. Plays a key role in cell positioning and movement in lymphoid tissues: 7-alpha,25-dihydroxycholesterol (7-alpha,25-OHC) acts as a ligand for the G protein-coupled receptor GPR183/EBI2, a chemotactic receptor for a number of lymphoid cells. The chain is 25-hydroxycholesterol 7-alpha-hydroxylase (Cyp7b1) from Rattus norvegicus (Rat).